The following is a 777-amino-acid chain: Dynamin-like protein ARC5 (777 aa).

One can recognise a Dynamin-type G domain in the interval 45-343; it reads PFEAPAVLVV…LWKRYKESVP (299 aa). A G1 motif region spans residues 55 to 62; that stretch reads GQQTDGKS. A GTP-binding site is contributed by 55-62; it reads GQQTDGKS. The tract at residues 81-83 is G2 motif; that stretch reads KTR. The segment at 160 to 163 is G3 motif; sequence DTPG. Residues 160 to 164 and 231 to 234 contribute to the GTP site; these read DTPGL and TKLD. The tract at residues 231–234 is G4 motif; it reads TKLD. The tract at residues 265-268 is G5 motif; it reads SPFF. Coiled-coil stretches lie at residues 300–320 and 728–765; these read EDIASLEKKLGRLLTKQEKSR and NLRQSLDQKKRSTEIELRRIKRIKEKFRVMNEKLNSHE.

It belongs to the TRAFAC class dynamin-like GTPase superfamily. Dynamin/Fzo/YdjA family. In terms of assembly, forms a homodimer and heterodimers with DRP3A and DRP3B on peroxisomes. Also interacts with FIS1A (but not FIS1B) and PEX11 proteins (PEX11A, PEX11B, PEX11C, PEX11D and PEX11E) on peroxisomes. Interacts with PDV1 and PDV2. Post-translationally, stabilized at the plastid outer envelope membranes (OEMs) in the constriction site when in complex with GTP, but destabilized after conversion of GTP into GDP leading to turnover with a cytosolic pool.

It is found in the cytoplasm. Its subcellular location is the plastid. It localises to the chloroplast outer membrane. The protein resides in the peroxisome. The protein localises to the cytosol. It carries out the reaction GTP + H2O = GDP + phosphate + H(+). GTPase activity is repressed by PDV2 thus increasing stability at the plastid outer envelope membranes (OEMs) periphery. In terms of biological role, mechanochemical GTPase component of both plastid and peroxisome division machinery. Required for the last steps of plastid division specifically in mesophyll-cell, when the narrow isthmus breaks, facilitating the separation of the daughter plastids. Necessary for peroxisome activities. Seems to influence stromule (stroma-filled tubular extensions of the plastid envelope membrane) length and frequency. In Arabidopsis thaliana (Mouse-ear cress), this protein is Dynamin-like protein ARC5.